Here is a 173-residue protein sequence, read N- to C-terminus: Cytidylate kinase (173 aa).

Residue 7-15 participates in ATP binding; sequence GLAGTGTST.

This sequence belongs to the cytidylate kinase family. Type 2 subfamily.

The protein localises to the cytoplasm. The catalysed reaction is CMP + ATP = CDP + ADP. It carries out the reaction dCMP + ATP = dCDP + ADP. The polypeptide is Cytidylate kinase (Methanosphaera stadtmanae (strain ATCC 43021 / DSM 3091 / JCM 11832 / MCB-3)).